The chain runs to 158 residues: UPF0225 protein PSEEN1229 (158 aa).

Belongs to the UPF0225 family.

In Pseudomonas entomophila (strain L48), this protein is UPF0225 protein PSEEN1229.